The following is a 648-amino-acid chain: Spastin (648 aa).

The Cytoplasmic portion of the chain corresponds to 1–40 (MASTVALLRDSSDDRENFDDGETDCVQVGRKRKLTVFFYP). The helical intramembrane region spans 41–61 (LLLVFWLLRWVFYQFFLVLCF). Over 62–648 (VCRGFVPRRH…WNREFGDITV (587 aa)) the chain is Cytoplasmic. The 76-residue stretch at 99-174 (HKKAFDFISK…EMARDRLDFL (76 aa)) folds into the MIT domain. The disordered stretch occupies residues 188–346 (PWHGGVAPAQ…SQRSLLSSRV (159 aa)). Residues 247–266 (TGVTLRRQQQQQLGGVSTVS) are compositionally biased toward low complexity. Residue 414–421 (GPPGNGKT) coordinates ATP.

It belongs to the AAA ATPase family. Spastin subfamily. In terms of assembly, homohexamer. The homohexamer is stabilized by ATP-binding. The homohexamer may adopt a ring conformation through which microtubules pass prior to being severed. Interacts with microtubules.

It is found in the membrane. Its subcellular location is the cytoplasm. It localises to the cytoskeleton. The protein resides in the microtubule organizing center. The protein localises to the centrosome. The enzyme catalyses n ATP + n H2O + a microtubule = n ADP + n phosphate + (n+1) alpha/beta tubulin heterodimers.. Its function is as follows. ATP-dependent microtubule severing protein. Microtubule severing may promote reorganization of cellular microtubule arrays and the release of microtubules from the microtubule organizing center following nucleation. This is Spastin (spas) from Ixodes scapularis (Black-legged tick).